The sequence spans 490 residues: Polyamine transporter RMV1 (490 aa).

Positions 1–21 (MTELSSPNLDSASQKPRISTE) are enriched in polar residues. The interval 1–38 (MTELSSPNLDSASQKPRISTENPPPPPPHISIGVTTGD) is disordered. 12 helical membrane-spanning segments follow: residues 53–73 (ITVLPLVFLIFYEVSGGPFGI), 83–103 (LLAIVGFIVFPFIWSIPEALI), 116–136 (GYVVWVTLAMGPYWGFQQGWV), 160–180 (IPILGSGIPRVAAILVLTVAL), 188–208 (LSIVGVAAVLLGVFSILPFVV), 231–248 (GVNWSLYLNTLFWNLNYW), 273–293 (LLLVVFSYIFPVLTGTGAIAL), 303–323 (FADIGKVIGGVWLGWWIQAAA), 363–383 (TPWVGILFSASGVIILSWLSF), 386–406 (IVAAENLLYCFGMVLEFITFV), 425–445 (VLGSVLMCIPPTVLIGVIMAF), and 448–468 (LKVALVSLAAIVIGLVLQPCL).

It belongs to the amino acid-polyamine-organocation (APC) superfamily. Polyamine:cation symporter (PHS) (TC 2.A.3.12) family.

It is found in the cell membrane. Cell membrane polyamine/proton symporter involved in the polyamine uptake in cells. Possesses high affinity for spermine and spermidine and lower affinity for putrescine. Transports paraquat, a polyamine analog, and thus confers sensitivity to this chemical which is used as a herbicide. In Arabidopsis thaliana (Mouse-ear cress), this protein is Polyamine transporter RMV1 (RMV1).